Reading from the N-terminus, the 251-residue chain is tRNA pseudouridine synthase A 1 (251 aa).

The active-site Nucleophile is the aspartate 52. Residue tyrosine 110 coordinates substrate.

This sequence belongs to the tRNA pseudouridine synthase TruA family. In terms of assembly, homodimer.

It catalyses the reaction uridine(38/39/40) in tRNA = pseudouridine(38/39/40) in tRNA. Formation of pseudouridine at positions 38, 39 and 40 in the anticodon stem and loop of transfer RNAs. The protein is tRNA pseudouridine synthase A 1 of Desulfotalea psychrophila (strain LSv54 / DSM 12343).